Reading from the N-terminus, the 106-residue chain is ATP-dependent Clp protease adapter protein ClpS (106 aa).

This sequence belongs to the ClpS family. As to quaternary structure, binds to the N-terminal domain of the chaperone ClpA.

In terms of biological role, involved in the modulation of the specificity of the ClpAP-mediated ATP-dependent protein degradation. The protein is ATP-dependent Clp protease adapter protein ClpS of Cronobacter sakazakii (strain ATCC BAA-894) (Enterobacter sakazakii).